The chain runs to 299 residues: ATP phosphoribosyltransferase (299 aa).

This sequence belongs to the ATP phosphoribosyltransferase family. Long subfamily. In terms of assembly, equilibrium between an active dimeric form, an inactive hexameric form and higher aggregates. Interconversion between the various forms is largely reversible and is influenced by the natural substrates and inhibitors of the enzyme. Requires Mg(2+) as cofactor.

Its subcellular location is the cytoplasm. It carries out the reaction 1-(5-phospho-beta-D-ribosyl)-ATP + diphosphate = 5-phospho-alpha-D-ribose 1-diphosphate + ATP. Its pathway is amino-acid biosynthesis; L-histidine biosynthesis; L-histidine from 5-phospho-alpha-D-ribose 1-diphosphate: step 1/9. Its activity is regulated as follows. Feedback inhibited by histidine. Catalyzes the condensation of ATP and 5-phosphoribose 1-diphosphate to form N'-(5'-phosphoribosyl)-ATP (PR-ATP). Has a crucial role in the pathway because the rate of histidine biosynthesis seems to be controlled primarily by regulation of HisG enzymatic activity. In Escherichia coli O8 (strain IAI1), this protein is ATP phosphoribosyltransferase.